Reading from the N-terminus, the 361-residue chain is Histidinol-phosphate aminotransferase (361 aa).

Position 219 is an N6-(pyridoxal phosphate)lysine (Lys-219).

Belongs to the class-II pyridoxal-phosphate-dependent aminotransferase family. Histidinol-phosphate aminotransferase subfamily. As to quaternary structure, homodimer. Pyridoxal 5'-phosphate serves as cofactor.

The catalysed reaction is L-histidinol phosphate + 2-oxoglutarate = 3-(imidazol-4-yl)-2-oxopropyl phosphate + L-glutamate. It participates in amino-acid biosynthesis; L-histidine biosynthesis; L-histidine from 5-phospho-alpha-D-ribose 1-diphosphate: step 7/9. The sequence is that of Histidinol-phosphate aminotransferase from Acinetobacter baumannii (strain ACICU).